Consider the following 193-residue polypeptide: dCTP deaminase, dUMP-forming (193 aa).

DCTP-binding positions include 101-106 (KSSLGR), aspartate 119, 127-129 (TLE), glutamine 148, tyrosine 162, and glutamine 174. Residue glutamate 129 is the Proton donor/acceptor of the active site. A disordered region spans residues 161-184 (PYGSETTGSHYQGQRGPTPSRSYQ).

Belongs to the dCTP deaminase family. In terms of assembly, homotrimer.

It carries out the reaction dCTP + 2 H2O = dUMP + NH4(+) + diphosphate. The protein operates within pyrimidine metabolism; dUMP biosynthesis; dUMP from dCTP: step 1/1. In terms of biological role, bifunctional enzyme that catalyzes both the deamination of dCTP to dUTP and the hydrolysis of dUTP to dUMP without releasing the toxic dUTP intermediate. This Bifidobacterium animalis subsp. lactis (strain AD011) protein is dCTP deaminase, dUMP-forming.